A 122-amino-acid chain; its full sequence is Large ribosomal subunit protein uL14 (122 aa).

Belongs to the universal ribosomal protein uL14 family. In terms of assembly, part of the 50S ribosomal subunit. Forms a cluster with proteins L3 and L19. In the 70S ribosome, L14 and L19 interact and together make contacts with the 16S rRNA in bridges B5 and B8.

Binds to 23S rRNA. Forms part of two intersubunit bridges in the 70S ribosome. This Streptococcus pneumoniae (strain JJA) protein is Large ribosomal subunit protein uL14.